We begin with the raw amino-acid sequence, 802 residues long: Copper-exporting P-type ATPase (802 aa).

2 consecutive HMA domains span residues 5-70 (KKTT…YGVA) and 72-138 (ETVE…YDAS). C16, C19, C83, and C86 together coordinate Cu(+). Helical transmembrane passes span 161–181 (LIIS…HLFN), 192–212 (WFQF…FYVG), 224–244 (MDVL…YEMV), 256–276 (LYFE…YLEA), 411–431 (YFVP…ITLV), and 438–458 (PALV…LGLA). The active-site 4-aspartylphosphate intermediate is D495. D690 and D694 together coordinate Mg(2+). A run of 2 helical transmembrane segments spans residues 748-767 (LFWA…LGLL) and 771-790 (VAGA…ALRL).

Belongs to the cation transport ATPase (P-type) (TC 3.A.3) family. Type IB subfamily.

It localises to the cell membrane. It catalyses the reaction Cu(+)(in) + ATP + H2O = Cu(+)(out) + ADP + phosphate + H(+). In terms of biological role, involved in copper export. In Staphylococcus aureus (strain MRSA252), this protein is Copper-exporting P-type ATPase (copA).